Reading from the N-terminus, the 569-residue chain is Peroxisomal targeting signal receptor (569 aa).

Cys9 is covalently cross-linked (Glycyl cysteine thioester (Cys-Gly) (interchain with G-Cter in ubiquitin)). The interval 10–32 is amphipathic helix 1 (AH1); it reads AANANPLAQFFKQSQHDTSLEQS. Residue Lys21 forms a Glycyl lysine isopeptide (Lys-Gly) (interchain with G-Cter in ubiquitin) linkage. The disordered stretch occupies residues 23–42; that stretch reads SQHDTSLEQSLRNSAHDTHQ. Positions 57–72 are amphipathic helix 2 (AH2); that stretch reads RAHMEQFMNQSTPFNF. Short sequence motifs (wxxxF/Y motif) lie at residues 118–122 and 183–187; these read WSSEF and WEQQF. The segment at 218-234 is amphipathic helix 4 (AH4); the sequence is FDQVWDNIQETYADNML. Positions 243 to 247 match the WxxxF/Y motif 3 motif; it reads WEKDF. TPR repeat units lie at residues 272–305, 306–339, 340–377, 378–415, 416–449, 450–483, and 484–517; these read LDAY…NPGH, VDAW…SPQN, LVAL…VAER, ARNA…ANMD, SEVQ…NPND, ALAW…NPNF, and VRAR…HEVE.

This sequence belongs to the peroxisomal targeting signal receptor family. As to quaternary structure, interacts (via WxxxF/Y and LVxEF motifs) with PEX14; promoting translocation through the PEX13-PEX14 docking complex. In terms of processing, monoubiquitinated at Cys-9 by PEX2 during PEX5 passage through the retrotranslocation channel: monoubiquitination acts as a signal for PEX5 extraction and is required for proper export from peroxisomes and recycling. When PEX5 recycling is compromised, polyubiquitinated at Lys-21 by PEX10 during its passage through the retrotranslocation channel, leading to its degradation.

It is found in the cytoplasm. The protein localises to the cytosol. Its subcellular location is the peroxisome matrix. In terms of biological role, receptor that mediates peroxisomal import of proteins containing a C-terminal PTS1-type tripeptide peroxisomal targeting signal (SKL-type). Binds to cargo proteins containing a PTS1 peroxisomal targeting signal in the cytosol, and translocates them into the peroxisome matrix by passing through the PEX13-PEX14 docking complex along with cargo proteins. PEX5 receptor is then retrotranslocated into the cytosol, leading to release of bound cargo in the peroxisome matrix, and reset for a subsequent peroxisome import cycle. The polypeptide is Peroxisomal targeting signal receptor (PEX5) (Pichia angusta (Yeast)).